Reading from the N-terminus, the 192-residue chain is NADH-ubiquinone oxidoreductase subunit 9 (192 aa).

This sequence belongs to the complex I 30 kDa subunit family. As to quaternary structure, complex I is composed of about 30 different subunits.

The protein resides in the mitochondrion inner membrane. The catalysed reaction is a ubiquinone + NADH + 5 H(+)(in) = a ubiquinol + NAD(+) + 4 H(+)(out). Functionally, core subunit of the mitochondrial membrane respiratory chain NADH dehydrogenase (Complex I) that is believed to belong to the minimal assembly required for catalysis. Complex I functions in the transfer of electrons from NADH to the respiratory chain. The immediate electron acceptor for the enzyme is believed to be ubiquinone. The protein is NADH-ubiquinone oxidoreductase subunit 9 (NAD9) of Prototheca wickerhamii.